Reading from the N-terminus, the 286-residue chain is ATP synthase gamma chain (286 aa).

This sequence belongs to the ATPase gamma chain family. As to quaternary structure, F-type ATPases have 2 components, CF(1) - the catalytic core - and CF(0) - the membrane proton channel. CF(1) has five subunits: alpha(3), beta(3), gamma(1), delta(1), epsilon(1). CF(0) has three main subunits: a, b and c.

The protein resides in the cell inner membrane. Its function is as follows. Produces ATP from ADP in the presence of a proton gradient across the membrane. The gamma chain is believed to be important in regulating ATPase activity and the flow of protons through the CF(0) complex. The chain is ATP synthase gamma chain from Shewanella piezotolerans (strain WP3 / JCM 13877).